Here is a 217-residue protein sequence, read N- to C-terminus: Somatotropin (217 aa).

The N-terminal stretch at 1 to 26 is a signal peptide; the sequence is MAAGSRTSLLLAFALLCLPWLQEGSA. His-44 is a binding site for Zn(2+). Cys-79 and Cys-191 form a disulfide bridge. Position 132 is a phosphoserine (Ser-132). Residue Glu-200 participates in Zn(2+) binding. The cysteines at positions 208 and 215 are disulfide-linked.

It belongs to the somatotropin/prolactin family.

Its subcellular location is the secreted. In terms of biological role, plays an important role in growth control. Its major role in stimulating body growth is to stimulate the liver and other tissues to secrete IGF1. It stimulates both the differentiation and proliferation of myoblasts. It also stimulates amino acid uptake and protein synthesis in muscle and other tissues. In Macaca mulatta (Rhesus macaque), this protein is Somatotropin (GH1).